We begin with the raw amino-acid sequence, 726 residues long: Catalase-peroxidase (726 aa).

Residues 1-33 (MSTTDDTHNTLSAGKCPFHQGGHDRSAGAGTAS) are disordered. Positions 105–226 (WHGAGTYRSI…LGATEMGLIY (122 aa)) form a cross-link, tryptophyl-tyrosyl-methioninium (Trp-Tyr) (with M-252). The active-site Proton acceptor is the His-106. A cross-link (tryptophyl-tyrosyl-methioninium (Tyr-Met) (with W-105)) is located at residues 226 to 252 (YVNPEGPDHSGEPLSAAAAIRATFGNM). Heme b is bound at residue His-267.

The protein belongs to the peroxidase family. Peroxidase/catalase subfamily. In terms of assembly, homodimer or homotetramer. Requires heme b as cofactor. Formation of the three residue Trp-Tyr-Met cross-link is important for the catalase, but not the peroxidase activity of the enzyme.

The enzyme catalyses H2O2 + AH2 = A + 2 H2O. It catalyses the reaction 2 H2O2 = O2 + 2 H2O. Functionally, bifunctional enzyme with both catalase and broad-spectrum peroxidase activity. The chain is Catalase-peroxidase from Salmonella arizonae (strain ATCC BAA-731 / CDC346-86 / RSK2980).